The chain runs to 49 residues: Large ribosomal subunit protein bL33 (49 aa).

Belongs to the bacterial ribosomal protein bL33 family.

The protein is Large ribosomal subunit protein bL33 of Desulfitobacterium hafniense (strain Y51).